The chain runs to 294 residues: Probable 2-(5''-triphosphoribosyl)-3'-dephosphocoenzyme-A synthase (294 aa).

The protein belongs to the CitG/MdcB family.

The catalysed reaction is 3'-dephospho-CoA + ATP = 2'-(5''-triphospho-alpha-D-ribosyl)-3'-dephospho-CoA + adenine. This Streptococcus pyogenes serotype M28 (strain MGAS6180) protein is Probable 2-(5''-triphosphoribosyl)-3'-dephosphocoenzyme-A synthase.